Consider the following 1146-residue polypeptide: Lysine-specific demethylase 2A (1146 aa).

The JmjC domain occupies 146-314 (FSHTKLENLV…MQLRIYSIED (169 aa)). Substrate is bound at residue threonine 207. The Fe cation site is built by histidine 210 and aspartate 212. Lysine 227 is a substrate binding site. Histidine 282 lines the Fe cation pocket. 2 disordered regions span residues 363–467 (LNGR…PDSP) and 554–585 (TKPH…SSGA). Residues 373–387 (SSSSSSSSSGLSSSS) show a composition bias toward low complexity. Over residues 388–401 (DNDDSSDQDWEEEE) the composition is skewed to acidic residues. Basic and acidic residues predominate over residues 402–442 (GLRKRERDRCRVERELQRKRNRDRQQRDQERDRHGRTERII). A compositionally biased stretch (pro residues) spans 453 to 467 (LTPPPSLPLPTPDSP). Residues 566–584 (STAPPRTSGTPSGTTASSG) show a composition bias toward low complexity. The segment at 585-631 (ARRRRVRCRKCQACVQRECGTCHYCKDMKKFGGPGRMKQSCVLRQCL) adopts a CXXC-type zinc-finger fold. Positions 592, 595, 598, 603, 606, 609, 625, and 630 each coordinate Zn(2+). The segment at 638-699 (SVTCALCGEV…YWECPKCYEG (62 aa)) adopts a PHD-type zinc-finger fold. 2 disordered regions span residues 733-800 (VLRP…EGDR) and 832-867 (TPNP…ENVM). The segment covering 739 to 762 (GQSPPSPPLLLLPPSPSSAPPTPP) has biased composition (pro residues). Residues 772-789 (SREERAKRRQLAREKENH) show a composition bias toward basic and acidic residues. A compositionally biased stretch (acidic residues) spans 849 to 864 (EREEEEEEEEEEEETE). The region spanning 874–919 (STSMQKDVWLSVFHYLTHEELCICMRVCKAWYKWGCDKRLWSRIDV) is the F-box domain. LRR repeat units lie at residues 945–966 (WTNV…LKDL), 968–994 (LAGC…DLRW), 1032–1057 (GLDI…DLSH), 1058–1087 (CPLL…HLAG), 1088–1112 (CKGV…DLHG), and 1113–1138 (CKQV…CLSD).

This sequence belongs to the JHDM1 histone demethylase family. The cofactor is Fe(2+).

The protein localises to the nucleus. The protein resides in the nucleoplasm. The enzyme catalyses N(6),N(6)-dimethyl-L-lysyl(36)-[histone H3] + 2 2-oxoglutarate + 2 O2 = L-lysyl(36)-[histone H3] + 2 formaldehyde + 2 succinate + 2 CO2. Its function is as follows. Histone demethylase that specifically demethylates 'Lys-36' of histone H3, thereby playing a central role in histone code. Preferentially demethylates dimethylated H3 'Lys-36' residue while it has weak or no activity for mono- and tri-methylated H3 'Lys-36'. May also recognize and bind to some phosphorylated proteins and promote their ubiquitination and degradation. Required to maintain the heterochromatic state. Associates with centromeres and represses transcription of small non-coding RNAs that are encoded by the clusters of satellite repeats at the centromere. Required to sustain centromeric integrity and genomic stability, particularly during mitosis. May play a role in the regulation of circadian gene expression. In Xenopus tropicalis (Western clawed frog), this protein is Lysine-specific demethylase 2A (kdm2a).